Reading from the N-terminus, the 833-residue chain is Leucine--tRNA ligase (833 aa).

The 'HIGH' region signature appears at 41–52 (PYPSGAGLHVGH). The 'KMSKS' region motif lies at 610 to 614 (KMSKS). Lys613 provides a ligand contact to ATP.

Belongs to the class-I aminoacyl-tRNA synthetase family.

It is found in the cytoplasm. It catalyses the reaction tRNA(Leu) + L-leucine + ATP = L-leucyl-tRNA(Leu) + AMP + diphosphate. This Streptococcus pneumoniae (strain Taiwan19F-14) protein is Leucine--tRNA ligase.